Reading from the N-terminus, the 1521-residue chain is uncharacterized protein (1521 aa).

5 disordered regions span residues Met-1–Asn-20, Thr-85–Asn-124, Ala-218–Ser-254, Val-431–Thr-482, and Asn-735–Gln-797. 3 stretches are compositionally biased toward low complexity: residues Asn-94–Pro-108, Ser-219–Ser-254, and Val-431–Ser-454. Polar residues predominate over residues Pro-455–His-464. Low complexity-rich tracts occupy residues Asn-465–Thr-482 and Asn-735–Leu-762. Over residues Ser-763–Pro-774 the composition is skewed to polar residues. The span at Asn-775–Gln-788 shows a compositional bias: low complexity. A coiled-coil region spans residues Ile-853 to Asn-903. The segment covering Gln-1398–Ser-1453 has biased composition (low complexity). Positions Gln-1398–Arg-1455 are disordered.

This is an uncharacterized protein from Dictyostelium discoideum (Social amoeba).